The sequence spans 72 residues: Long neurotoxin 1 (72 aa).

Cystine bridges form between Cys3–Cys21, Cys14–Cys42, Cys27–Cys31, Cys46–Cys57, and Cys58–Cys63.

The protein belongs to the three-finger toxin family. Long-chain subfamily. Type II alpha-neurotoxin sub-subfamily. As to expression, expressed by the venom gland.

Its subcellular location is the secreted. Binds with high affinity to muscular (alpha-1/CHRNA1) and neuronal (alpha-7/CHRNA7) nicotinic acetylcholine receptor (nAChR) and inhibits acetylcholine from binding to the receptor, thereby impairing neuromuscular and neuronal transmission. In Naja anchietae (Anchieta's cobra), this protein is Long neurotoxin 1.